We begin with the raw amino-acid sequence, 523 residues long: Succinate-semialdehyde dehydrogenase, mitochondrial (523 aa).

The N-terminal 35 residues, 1–35, are a transit peptide targeting the mitochondrion; sequence MATCFLLRNFCAARPALRPPGRLLREPAGAQRRSY. N6-acetyllysine; alternate is present on Lys-114. Lys-114 carries the N6-succinyllysine; alternate modification. Residues Lys-123 and Lys-172 each carry the N6-succinyllysine modification. Residues Arg-201 and 216 to 219 contribute to the NAD(+) site; that span reads KPAE. Arg-201 serves as a coordination point for substrate. Lys-253 is subject to N6-acetyllysine; alternate. At Lys-253 the chain carries N6-succinyllysine; alternate. 272–277 is a binding site for NAD(+); that stretch reads GSTATG. Residue Glu-294 is the Proton acceptor of the active site. Position 322 (Arg-322) interacts with substrate. Residue Cys-328 is the Nucleophile of the active site. A disulfide bridge links Cys-328 with Cys-330. Residue Lys-353 is modified to N6-acetyllysine. Lys-390 is subject to N6-succinyllysine. Lys-399 is modified (N6-acetyllysine). Ser-486 contributes to the substrate binding site. A Phosphoserine modification is found at Ser-487.

This sequence belongs to the aldehyde dehydrogenase family. As to quaternary structure, homotetramer. Brain, pancreas, heart, liver, skeletal muscle, kidney. Lower in spleen, lung, kidney and testis.

It localises to the mitochondrion. The catalysed reaction is succinate semialdehyde + NAD(+) + H2O = succinate + NADH + 2 H(+). Its pathway is amino-acid degradation; 4-aminobutanoate degradation. Redox-regulated. Inhibited under oxydizing conditions. In terms of biological role, catalyzes one step in the degradation of the inhibitory neurotransmitter gamma-aminobutyric acid (GABA). The protein is Succinate-semialdehyde dehydrogenase, mitochondrial (Aldh5a1) of Rattus norvegicus (Rat).